A 349-amino-acid chain; its full sequence is DNA replication and repair protein RecF (349 aa).

ATP is bound at residue 29–36 (GLNGVGKT).

The protein belongs to the RecF family.

Its subcellular location is the cytoplasm. Functionally, the RecF protein is involved in DNA metabolism; it is required for DNA replication and normal SOS inducibility. RecF binds preferentially to single-stranded, linear DNA. It also seems to bind ATP. The chain is DNA replication and repair protein RecF from Acholeplasma laidlawii (strain PG-8A).